Consider the following 273-residue polypeptide: Glutamate racemase (273 aa).

Residues 11-12 and 43-44 each bind substrate; these read DS and YG. Residue Cys-74 is the Proton donor/acceptor of the active site. Residue 75-76 coordinates substrate; the sequence is NT. Cys-185 (proton donor/acceptor) is an active-site residue. 186 to 187 lines the substrate pocket; that stretch reads TH.

Belongs to the aspartate/glutamate racemases family. Homodimer.

It catalyses the reaction L-glutamate = D-glutamate. It participates in cell wall biogenesis; peptidoglycan biosynthesis. Functionally, provides the (R)-glutamate required for cell wall biosynthesis. This is Glutamate racemase from Enterococcus faecalis (strain ATCC 700802 / V583).